The sequence spans 369 residues: Ubiquinone biosynthesis protein COQ4, mitochondrial (369 aa).

A mitochondrion-targeting transit peptide spans 1–35; the sequence is MLTSQKVSRVLLHSSFLKTPVSTQSRSFVFTTIAT. Zn(2+)-binding residues include H212, D213, H216, and E228. Over residues 329–360 the composition is skewed to low complexity; it reads AAAAATVTQRQRQQQRATATAANATSASSANV. A disordered region spans residues 329-369; sequence AAAAATVTQRQRQQQRATATAANATSASSANVKPSNTAGAM.

Belongs to the COQ4 family. Component of a multi-subunit COQ enzyme complex, composed of at least COQ3, COQ4, COQ5, COQ6, COQ7 and COQ9. Zn(2+) is required as a cofactor.

The protein resides in the mitochondrion inner membrane. It carries out the reaction a 4-hydroxy-3-methoxy-5-(all-trans-polyprenyl)benzoate + H(+) = a 2-methoxy-6-(all-trans-polyprenyl)phenol + CO2. It participates in cofactor biosynthesis; ubiquinone biosynthesis. Its function is as follows. Lyase that catalyzes the C1-decarboxylation of 4-hydroxy-3-methoxy-5-(all-trans-polyprenyl)benzoic acid into 2-methoxy-6-(all-trans-polyprenyl)phenol during ubiquinone biosynthesis. The sequence is that of Ubiquinone biosynthesis protein COQ4, mitochondrial from Lodderomyces elongisporus (strain ATCC 11503 / CBS 2605 / JCM 1781 / NBRC 1676 / NRRL YB-4239) (Yeast).